A 1264-amino-acid polypeptide reads, in one-letter code: Kinesin-like protein KIN-14B (1264 aa).

Over residues 1 to 10 (MAEQKSTNMW) the composition is skewed to polar residues. Residues 1–52 (MAEQKSTNMWNWEVTGFESKKSPSSEEGVHRTPSSMLRRYSIPKNSLPPHSS) are disordered. The segment covering 18–30 (ESKKSPSSEEGVH) has biased composition (basic and acidic residues). The stretch at 53–84 (ELASKVQSLKDKVQLAKDDYVGLRQEATDLQE) forms a coiled coil. In terms of domain architecture, Kinesin motor spans 138 to 452 (NVKVFCRARP…LNYAARARNT (315 aa)). ATP is bound at residue 219–226 (GQTHAGKT). 3 coiled-coil regions span residues 462–511 (IKKW…YNEV), 545–592 (QLRN…LKSD), and 617–640 (TKKL…ENEK). The segment at 588–615 (ALKSDMTRSRDPLEPQPRAAENTLDSSA) is disordered. The span at 589–600 (LKSDMTRSRDPL) shows a compositional bias: basic and acidic residues. Low complexity predominate over residues 652-668 (SSTQVSSPSSKASPTVQ). 2 disordered regions span residues 652 to 684 (SSTQ…SVDK) and 1117 to 1136 (PEQE…SISS).

Belongs to the TRAFAC class myosin-kinesin ATPase superfamily. Kinesin family. KIN-14 subfamily. In terms of assembly, homodimer and heterodimer with KCA1. Interacts with CDKA-1. Interacts with At4g14310. As to expression, expressed in roots, leaves, stems and flowers.

It is found in the cell membrane. Kinesin-like protein required for chloroplast movements and anchor to the plasma membrane. Mediates chloroplast movement via chloroplast actin (cp-actin) filaments. Required for the chloroplast avoidance response under high intensity blue light. Mediates redundantly with CHUP1 the nuclear avoidance response under high intensity blue light. May be involved in division plane determination. This Arabidopsis thaliana (Mouse-ear cress) protein is Kinesin-like protein KIN-14B.